The sequence spans 247 residues: Transcription factor bHLH92 (247 aa).

Residues 85 to 134 enclose the bHLH domain; the sequence is ERSRRHMLKERTRREKQKQSYLALHSLLPFATKNDKNSIVEKAVDEIAKL.

As to quaternary structure, homodimer.

It localises to the nucleus. The sequence is that of Transcription factor bHLH92 (BHLH92) from Arabidopsis thaliana (Mouse-ear cress).